The chain runs to 91 residues: uncharacterized protein (91 aa).

Residues 7-23 (IALVGVVVVLFGALRYQ) form a helical membrane-spanning segment.

The protein resides in the membrane. This is an uncharacterized protein from Haemophilus influenzae (strain ATCC 51907 / DSM 11121 / KW20 / Rd).